The following is a 210-amino-acid chain: Probable GTP-binding protein EngB (210 aa).

Residues Cys25 to Glu199 form the EngB-type G domain. Residues Gly33–Ser40, Gly60–Leu64, Asp78–Gly81, Thr145–Asp148, and Phe178–Ser180 each bind GTP. Residues Ser40 and Thr62 each coordinate Mg(2+).

It belongs to the TRAFAC class TrmE-Era-EngA-EngB-Septin-like GTPase superfamily. EngB GTPase family. Requires Mg(2+) as cofactor.

Necessary for normal cell division and for the maintenance of normal septation. This is Probable GTP-binding protein EngB from Salmonella paratyphi C (strain RKS4594).